Here is a 243-residue protein sequence, read N- to C-terminus: Small ribosomal subunit protein uS3 (243 aa).

One can recognise a KH type-2 domain in the interval isoleucine 38 to lysine 106. Residues proline 214–arginine 243 form a disordered region.

This sequence belongs to the universal ribosomal protein uS3 family. Part of the 30S ribosomal subunit. Forms a tight complex with proteins S10 and S14.

Functionally, binds the lower part of the 30S subunit head. Binds mRNA in the 70S ribosome, positioning it for translation. This chain is Small ribosomal subunit protein uS3, found in Bacteroides thetaiotaomicron (strain ATCC 29148 / DSM 2079 / JCM 5827 / CCUG 10774 / NCTC 10582 / VPI-5482 / E50).